The primary structure comprises 166 residues: NAD(P)H-quinone oxidoreductase subunit I, chloroplastic (166 aa).

4Fe-4S ferredoxin-type domains follow at residues 55–84 (GRIH…VDWK) and 95–124 (LNYS…MTEE). Residues cysteine 64, cysteine 67, cysteine 70, cysteine 74, cysteine 104, cysteine 107, cysteine 110, and cysteine 114 each contribute to the [4Fe-4S] cluster site.

The protein belongs to the complex I 23 kDa subunit family. NDH is composed of at least 16 different subunits, 5 of which are encoded in the nucleus. [4Fe-4S] cluster is required as a cofactor.

It localises to the plastid. The protein localises to the chloroplast thylakoid membrane. It carries out the reaction a plastoquinone + NADH + (n+1) H(+)(in) = a plastoquinol + NAD(+) + n H(+)(out). It catalyses the reaction a plastoquinone + NADPH + (n+1) H(+)(in) = a plastoquinol + NADP(+) + n H(+)(out). Its function is as follows. NDH shuttles electrons from NAD(P)H:plastoquinone, via FMN and iron-sulfur (Fe-S) centers, to quinones in the photosynthetic chain and possibly in a chloroplast respiratory chain. The immediate electron acceptor for the enzyme in this species is believed to be plastoquinone. Couples the redox reaction to proton translocation, and thus conserves the redox energy in a proton gradient. This Hulsea algida (Pacific hulsea) protein is NAD(P)H-quinone oxidoreductase subunit I, chloroplastic.